The sequence spans 192 residues: Putative integrase/recombinase y4gC (192 aa).

The region spanning 1 to 183 (MPSILERDQI…ATEDLRAIAL (183 aa)) is the Tyr recombinase domain. Residues R41, K66, H135, R138, and H161 contribute to the active site. Residue Y170 is the O-(3'-phospho-DNA)-tyrosine intermediate of the active site.

Belongs to the 'phage' integrase family.

The polypeptide is Putative integrase/recombinase y4gC (Sinorhizobium fredii (strain NBRC 101917 / NGR234)).